A 621-amino-acid chain; its full sequence is tRNA uridine 5-carboxymethylaminomethyl modification enzyme MnmG (621 aa).

8-13 is a binding site for FAD; it reads GAGHAG. 269–283 lines the NAD(+) pocket; it reads GPRYCPSVEDKIFRF.

This sequence belongs to the MnmG family. In terms of assembly, homodimer. Heterotetramer of two MnmE and two MnmG subunits. FAD serves as cofactor.

The protein localises to the cytoplasm. In terms of biological role, NAD-binding protein involved in the addition of a carboxymethylaminomethyl (cmnm) group at the wobble position (U34) of certain tRNAs, forming tRNA-cmnm(5)s(2)U34. In Chlorobium chlorochromatii (strain CaD3), this protein is tRNA uridine 5-carboxymethylaminomethyl modification enzyme MnmG.